The following is a 135-amino-acid chain: Large ribosomal subunit protein uL16c (135 aa).

The protein belongs to the universal ribosomal protein uL16 family. As to quaternary structure, part of the 50S ribosomal subunit.

It localises to the plastid. It is found in the chloroplast. The chain is Large ribosomal subunit protein uL16c from Drimys granadensis.